Here is a 197-residue protein sequence, read N- to C-terminus: Imidazoleglycerol-phosphate dehydratase (197 aa).

This sequence belongs to the imidazoleglycerol-phosphate dehydratase family.

It localises to the cytoplasm. It catalyses the reaction D-erythro-1-(imidazol-4-yl)glycerol 3-phosphate = 3-(imidazol-4-yl)-2-oxopropyl phosphate + H2O. Its pathway is amino-acid biosynthesis; L-histidine biosynthesis; L-histidine from 5-phospho-alpha-D-ribose 1-diphosphate: step 6/9. This Pseudomonas putida (strain ATCC 700007 / DSM 6899 / JCM 31910 / BCRC 17059 / LMG 24140 / F1) protein is Imidazoleglycerol-phosphate dehydratase.